A 379-amino-acid polypeptide reads, in one-letter code: Cytochrome b (379 aa).

Transmembrane regions (helical) follow at residues 33–53, 77–98, 113–133, and 178–198; these read FGSL…FLAM, WMIR…FIHV, WNVG…GYVL, and FFAL…IHLL. Heme b-binding residues include H83 and H97. H182 and H196 together coordinate heme b. An a ubiquinone-binding site is contributed by H201. Transmembrane regions (helical) follow at residues 226-246, 288-308, 320-340, and 347-367; these read TKDF…ALFY, LGGV…PFLQ, LSQF…WIGG, and FISI…FIMP.

Belongs to the cytochrome b family. As to quaternary structure, the cytochrome bc1 complex contains 11 subunits: 3 respiratory subunits (MT-CYB, CYC1 and UQCRFS1), 2 core proteins (UQCRC1 and UQCRC2) and 6 low-molecular weight proteins (UQCRH/QCR6, UQCRB/QCR7, UQCRQ/QCR8, UQCR10/QCR9, UQCR11/QCR10 and a cleavage product of UQCRFS1). This cytochrome bc1 complex then forms a dimer. Requires heme b as cofactor.

The protein localises to the mitochondrion inner membrane. Functionally, component of the ubiquinol-cytochrome c reductase complex (complex III or cytochrome b-c1 complex) that is part of the mitochondrial respiratory chain. The b-c1 complex mediates electron transfer from ubiquinol to cytochrome c. Contributes to the generation of a proton gradient across the mitochondrial membrane that is then used for ATP synthesis. This chain is Cytochrome b (MT-CYB), found in Lepilemur septentrionalis (Northern sportive lemur).